The primary structure comprises 62 residues: Keratin-associated protein 19-5 (62 aa).

The 14 X 2 AA repeats of G-[YCGS] stretch occupies residues 5–56; sequence GSYYGGLGSGIRGFGNLGYGYGCGCGFGGYGYGSGYGRYGYGYPRPLYYGGY.

It belongs to the KRTAP type 19 family. As to quaternary structure, interacts with hair keratins. As to expression, expressed in skin during two hair growth cycles. Expression restricted to the cortical cells of hair follicles, appearing first in the cortical cells processing the flat nuclei located a few cells above the dermal papilla.

In the hair cortex, hair keratin intermediate filaments are embedded in an interfilamentous matrix, consisting of hair keratin-associated proteins (KRTAP), which are essential for the formation of a rigid and resistant hair shaft through their extensive disulfide bond cross-linking with abundant cysteine residues of hair keratins. The matrix proteins include the high-sulfur and high-glycine-tyrosine keratins. The sequence is that of Keratin-associated protein 19-5 (Krtap19-5) from Mus musculus (Mouse).